Consider the following 194-residue polypeptide: Casparian strip membrane protein 2 (194 aa).

Topologically, residues 1 to 32 are cytoplasmic; the sequence is MSTTIDVPESSNVAKGKAVLVAPPRPGGWKKG. A helical membrane pass occupies residues 33–53; that stretch reads VAIMDFILRLGAIAAALGAAA. At 54–82 the chain is on the extracellular side; sequence TMGTSDQTLPFFTQFLQFEASYDSFTSFQ. A helical transmembrane segment spans residues 83 to 103; sequence FFVITMALVGGYLVLSLPFSF. Residues 104–115 are Cytoplasmic-facing; it reads VAIIRPHAAGPR. A helical membrane pass occupies residues 116–136; sequence LFLIILDTVFLTLTTASGASA. The Extracellular portion of the chain corresponds to 137-168; the sequence is AAIVYLAHNGNQDSNWLAICNQFGDFCAQTSS. The chain crosses the membrane as a helical span at residues 169 to 189; the sequence is AVVSSFVAVVVLVLLVVLSAL. Over 190–194 the chain is Cytoplasmic; the sequence is ALGKR.

It belongs to the Casparian strip membrane proteins (CASP) family. In terms of assembly, homodimer and heterodimers.

Its subcellular location is the cell membrane. Functionally, regulates membrane-cell wall junctions and localized cell wall deposition. Required for establishment of the Casparian strip membrane domain (CSD) and the subsequent formation of Casparian strips, a cell wall modification of the root endodermis that determines an apoplastic barrier between the intraorganismal apoplasm and the extraorganismal apoplasm and prevents lateral diffusion. This chain is Casparian strip membrane protein 2, found in Glycine max (Soybean).